The following is a 1101-amino-acid chain: Leucine-rich repeat receptor-like serine/threonine-protein kinase At1g17230 (1101 aa).

The first 23 residues, 1–23 (MRGRICFLAIVILCSFSFILVRS), serve as a signal peptide directing secretion. Residues 24–734 (LNEEGRVLLE…WLINGSQRQK (711 aa)) are Extracellular-facing. 4 N-linked (GlcNAc...) asparagine glycosylation sites follow: Asn-39, Asn-57, Asn-78, and Asn-97. LRR repeat units follow at residues 66-90 (LRTV…ICKL), 91-115 (HGLR…SLCR), 117-137 (LEVL…QLTM), 138-162 (IITL…IGNL), 163-186 (SSLQ…MAKL), 188-210 (QLRI…ISGC), 211-234 (ESLK…LEKL), 235-258 (QNLT…VGNI), 260-282 (RLEV…IGKL), 283-306 (TKMK…IGNL), 308-329 (DAAE…EFGH), 330-354 (ILNL…LGEL), 355-379 (TLLE…QFLP), 381-402 (LVDL…IGFY), 403-426 (SNFS…FCRF), 427-450 (QTLI…LKTC), 451-474 (KSLT…LFNL), 476-498 (NLTA…LGKL), 499-522 (KNLE…IGNL), 524-546 (KIVG…LGSC), 548-569 (TIQR…ELGQ), 570-593 (LVYL…SFGD), 595-618 (TRLM…LGKL), 619-643 (TSLQ…LGNL), 644-667 (QMLE…IGNL), and 669-692 (SLLI…VFQR). N-linked (GlcNAc...) asparagine glycans are attached at residues Asn-161 and Asn-174. N-linked (GlcNAc...) asparagine glycans are attached at residues Asn-236 and Asn-257. Asn-368 is a glycosylation site (N-linked (GlcNAc...) asparagine). Residue Asn-404 is glycosylated (N-linked (GlcNAc...) asparagine). N-linked (GlcNAc...) asparagine glycosylation is found at Asn-476, Asn-490, Asn-510, Asn-521, and Asn-529. Residues Asn-626 and Asn-631 are each glycosylated (N-linked (GlcNAc...) asparagine). Asn-674 and Asn-728 each carry an N-linked (GlcNAc...) asparagine glycan. A helical membrane pass occupies residues 735 to 755 (ILTITCIVIGSVFLITFLGLC). At 756–1101 (WTIKRREPAF…LEEANSSKEI (346 aa)) the chain is on the cytoplasmic side. Phosphothreonine is present on residues Thr-788 and Thr-796. Residues 799–1081 (FSEDVVLGRG…ITEARGSSSL (283 aa)) form the Protein kinase domain. Residues 805 to 813 (LGRGACGTV) and Lys-827 contribute to the ATP site. Phosphotyrosine occurs at positions 874 and 913. The active-site Proton acceptor is Asp-926. Ser-960 is subject to Phosphoserine. Residues Tyr-968 and Tyr-975 each carry the phosphotyrosine modification. Thr-976 is modified (phosphothreonine). A disordered region spans residues 1076–1101 (RGSSSLSSSSITSETPLEEANSSKEI). A compositionally biased stretch (low complexity) spans 1078-1088 (SSSLSSSSITS).

This sequence belongs to the protein kinase superfamily. Ser/Thr protein kinase family.

It is found in the cell membrane. The catalysed reaction is L-seryl-[protein] + ATP = O-phospho-L-seryl-[protein] + ADP + H(+). It carries out the reaction L-threonyl-[protein] + ATP = O-phospho-L-threonyl-[protein] + ADP + H(+). This Arabidopsis thaliana (Mouse-ear cress) protein is Leucine-rich repeat receptor-like serine/threonine-protein kinase At1g17230.